The following is a 509-amino-acid chain: 2,3-bisphosphoglycerate-independent phosphoglycerate mutase (509 aa).

D11 contacts Mn(2+). Phosphotyrosine is present on Y35. S61 contributes to the Mn(2+) binding site. Catalysis depends on S61, which acts as the Phosphoserine intermediate. Substrate contacts are provided by residues H122, 152 to 153 (RD), R184, R190, 260 to 263 (RPDR), and K335. Residues D402, H406, D443, H444, and H461 each contribute to the Mn(2+) site.

It belongs to the BPG-independent phosphoglycerate mutase family. Monomer. It depends on Mn(2+) as a cofactor.

The enzyme catalyses (2R)-2-phosphoglycerate = (2R)-3-phosphoglycerate. The protein operates within carbohydrate degradation; glycolysis; pyruvate from D-glyceraldehyde 3-phosphate: step 3/5. Essential for rapid growth and for sporulation. Catalyzes the interconversion of 2-phosphoglycerate and 3-phosphoglycerate. This Bacillus anthracis protein is 2,3-bisphosphoglycerate-independent phosphoglycerate mutase.